The chain runs to 274 residues: Large ribosomal subunit protein uL2 (274 aa).

Positions 224–256 (VMNPVDHPHGGGEGKTGEGRHPVDPWGNLTKGY) are disordered. Residues 229–246 (DHPHGGGEGKTGEGRHPV) show a composition bias toward basic and acidic residues.

This sequence belongs to the universal ribosomal protein uL2 family. As to quaternary structure, part of the 50S ribosomal subunit. Forms a bridge to the 30S subunit in the 70S ribosome.

Functionally, one of the primary rRNA binding proteins. Required for association of the 30S and 50S subunits to form the 70S ribosome, for tRNA binding and peptide bond formation. It has been suggested to have peptidyltransferase activity; this is somewhat controversial. Makes several contacts with the 16S rRNA in the 70S ribosome. The polypeptide is Large ribosomal subunit protein uL2 (Polaromonas sp. (strain JS666 / ATCC BAA-500)).